We begin with the raw amino-acid sequence, 323 residues long: Ribosomal RNA small subunit methyltransferase H (323 aa).

S-adenosyl-L-methionine contacts are provided by residues 44-46, D64, Y91, D112, and Q119; that span reads AGH.

The protein belongs to the methyltransferase superfamily. RsmH family.

It is found in the cytoplasm. The enzyme catalyses cytidine(1402) in 16S rRNA + S-adenosyl-L-methionine = N(4)-methylcytidine(1402) in 16S rRNA + S-adenosyl-L-homocysteine + H(+). In terms of biological role, specifically methylates the N4 position of cytidine in position 1402 (C1402) of 16S rRNA. This chain is Ribosomal RNA small subunit methyltransferase H, found in Nitratidesulfovibrio vulgaris (strain ATCC 29579 / DSM 644 / CCUG 34227 / NCIMB 8303 / VKM B-1760 / Hildenborough) (Desulfovibrio vulgaris).